Reading from the N-terminus, the 604-residue chain is Protein glass (604 aa).

4 disordered regions span residues 111-139 (ISTTPPASSGNGSSNNGAGGGSSGNHGYW), 199-237 (NSHNHGQMHSQHQQHQHQQSQVQASHVGNSLLQSSGGNN), 359-400 (LPPL…SPTS), and 414-434 (EDEEDSNEDLDGDEGSSGGEM). 2 stretches are compositionally biased toward low complexity: residues 117–126 (ASSGNGSSNN) and 200–237 (SHNHGQMHSQHQQHQHQQSQVQASHVGNSLLQSSGGNN). A compositionally biased stretch (acidic residues) spans 414–427 (EDEEDSNEDLDGDE). C2H2-type zinc fingers lie at residues 437 to 459 (NLCRLCGKTYARPSTLKTHLRTH), 465 to 487 (YRCPDCNKSFSQAANLTAHVRTH), 493 to 515 (FRCPICDRRFSQSSSVTTHMRTH), 521 to 543 (YRCSSCKKSFSDSSTLTKHLRIH), and 549 to 571 (YQCKLCLLRFSQSGNLNRHMRVH). Residues 566-604 (RHMRVHGNNNSSNGSNGATGVGGESSTGSGVGGGNSLLT) form a disordered region. The span at 572–581 (GNNNSSNGSN) shows a compositional bias: low complexity. Residues 582 to 604 (GATGVGGESSTGSGVGGGNSLLT) show a composition bias toward gly residues.

Its subcellular location is the nucleus. Functionally, transcription factor required for gene expression specific to photoreceptor cells. The polypeptide is Protein glass (gl) (Drosophila melanogaster (Fruit fly)).